The following is a 279-amino-acid chain: Tryptophan synthase alpha chain (279 aa).

Residues Glu50 and Asp61 each act as proton acceptor in the active site.

The protein belongs to the TrpA family. Tetramer of two alpha and two beta chains.

The enzyme catalyses (1S,2R)-1-C-(indol-3-yl)glycerol 3-phosphate + L-serine = D-glyceraldehyde 3-phosphate + L-tryptophan + H2O. It participates in amino-acid biosynthesis; L-tryptophan biosynthesis; L-tryptophan from chorismate: step 5/5. Its function is as follows. The alpha subunit is responsible for the aldol cleavage of indoleglycerol phosphate to indole and glyceraldehyde 3-phosphate. This is Tryptophan synthase alpha chain from Brucella ovis (strain ATCC 25840 / 63/290 / NCTC 10512).